Consider the following 310-residue polypeptide: p-hydroxybenzoic acid efflux pump subunit AaeA (310 aa).

Residues 12 to 32 (AITLVLVILAFIAIFRAWVYY) traverse the membrane as a helical segment.

It belongs to the membrane fusion protein (MFP) (TC 8.A.1) family.

It localises to the cell inner membrane. Functionally, forms an efflux pump with AaeB. The sequence is that of p-hydroxybenzoic acid efflux pump subunit AaeA from Salmonella arizonae (strain ATCC BAA-731 / CDC346-86 / RSK2980).